A 97-amino-acid chain; its full sequence is Protein CYSTEINE-RICH TRANSMEMBRANE MODULE 7 (97 aa).

Residues 1–27 (MASYHVSHDSYQSPGPSPLYQPIIEAP) are disordered. Positions 15 to 27 (GPSPLYQPIIEAP) are enriched in pro residues. The chain crosses the membrane as a helical span at residues 68–88 (YVGCFPFLRSCLTTLCCCWFV).

The protein belongs to the CYSTM1 family. As to quaternary structure, homodimer and heterodimers. Interacts with CYSTM3, CYSTM4, CYSTM5, CYSTM6, CYSTM10, WIH1/CYSTM13 and CYSTM11. Binds weakly to CYSTM1, CYSTM2 and CYSTM12. As to expression, mostly expressed in siliques and, to a lower extent, in stems, roots, leaves and flowers.

It is found in the cell membrane. In terms of biological role, involved in resistance to abiotic stress. The chain is Protein CYSTEINE-RICH TRANSMEMBRANE MODULE 7 from Arabidopsis thaliana (Mouse-ear cress).